We begin with the raw amino-acid sequence, 483 residues long: UDP-N-acetylmuramoyl-L-alanyl-D-glutamate--2,6-diaminopimelate ligase (483 aa).

Residue S30 coordinates UDP-N-acetyl-alpha-D-muramoyl-L-alanyl-D-glutamate. G109–T115 contacts ATP. UDP-N-acetyl-alpha-D-muramoyl-L-alanyl-D-glutamate is bound by residues T151–T152, S178, and R186. Position 218 is an N6-carboxylysine (K218). Meso-2,6-diaminopimelate contacts are provided by residues R380, D403–R406, G453, and E457. Residues D403–R406 carry the Meso-diaminopimelate recognition motif motif.

The protein belongs to the MurCDEF family. MurE subfamily. Mg(2+) serves as cofactor. Post-translationally, carboxylation is probably crucial for Mg(2+) binding and, consequently, for the gamma-phosphate positioning of ATP.

Its subcellular location is the cytoplasm. The catalysed reaction is UDP-N-acetyl-alpha-D-muramoyl-L-alanyl-D-glutamate + meso-2,6-diaminopimelate + ATP = UDP-N-acetyl-alpha-D-muramoyl-L-alanyl-gamma-D-glutamyl-meso-2,6-diaminopimelate + ADP + phosphate + H(+). Its pathway is cell wall biogenesis; peptidoglycan biosynthesis. Catalyzes the addition of meso-diaminopimelic acid to the nucleotide precursor UDP-N-acetylmuramoyl-L-alanyl-D-glutamate (UMAG) in the biosynthesis of bacterial cell-wall peptidoglycan. This Chlamydia trachomatis serovar A (strain ATCC VR-571B / DSM 19440 / HAR-13) protein is UDP-N-acetylmuramoyl-L-alanyl-D-glutamate--2,6-diaminopimelate ligase.